We begin with the raw amino-acid sequence, 308 residues long: Cytochrome c biogenesis protein CcsA (308 aa).

Transmembrane regions (helical) follow at residues 2 to 22 (IVST…SILI), 44 to 64 (GMLV…IYLG), 71 to 91 (LSES…IAYF), 143 to 163 (MILG…LMVI), 212 to 232 (VIGL…VWAN), 239 to 259 (WSWD…AIYL), and 273 to 293 (AIVA…VNLV).

The protein belongs to the CcmF/CycK/Ccl1/NrfE/CcsA family. In terms of assembly, may interact with Ccs1.

Its subcellular location is the plastid membrane. Required during biogenesis of c-type cytochromes (cytochrome c6 and cytochrome f) at the step of heme attachment. This is Cytochrome c biogenesis protein CcsA from Cuscuta exaltata (Tall dodder).